Reading from the N-terminus, the 633-residue chain is Extracellular metalloproteinase 5 (633 aa).

The first 21 residues, M1–H21, serve as a signal peptide directing secretion. The propeptide occupies P22–A245. N286 is a glycosylation site (N-linked (GlcNAc...) asparagine). H428 is a binding site for Zn(2+). Residue E429 is part of the active site. Position 432 (H432) interacts with Zn(2+). N592 and N621 each carry an N-linked (GlcNAc...) asparagine glycan.

This sequence belongs to the peptidase M36 family. Requires Zn(2+) as cofactor.

The protein resides in the secreted. Secreted metalloproteinase probably acting as a virulence factor. This Arthroderma benhamiae (Trichophyton mentagrophytes) protein is Extracellular metalloproteinase 5 (MEP5).